A 369-amino-acid chain; its full sequence is Molybdenum import ATP-binding protein ModC 1 (369 aa).

Residues 10–240 (KGYIEVAFNG…PALASRSEAA (231 aa)) enclose the ABC transporter domain. 42–49 (GPPGCGKT) contacts ATP. The Mop domain occupies 297 to 367 (ASSILNVFRA…ELCGKLGDDG (71 aa)).

The protein belongs to the ABC transporter superfamily. Molybdate importer (TC 3.A.1.8) family. The complex is composed of two ATP-binding proteins (ModC), two transmembrane proteins (ModB) and a solute-binding protein (ModA).

It is found in the cell inner membrane. The enzyme catalyses molybdate(out) + ATP + H2O = molybdate(in) + ADP + phosphate + H(+). Functionally, part of the ABC transporter complex ModABC involved in molybdenum import. Responsible for energy coupling to the transport system. The protein is Molybdenum import ATP-binding protein ModC 1 of Bradyrhizobium diazoefficiens (strain JCM 10833 / BCRC 13528 / IAM 13628 / NBRC 14792 / USDA 110).